The sequence spans 174 residues: uncharacterized protein (174 aa).

Composition is skewed to basic and acidic residues over residues 1–31 (MDKHGVKTPLWKKETEELRAEDAEQEEGKEG) and 52–67 (EPPRVAEEGEGRERRS). The segment at 1-69 (MDKHGVKTPL…GEGRERRSVS (69 aa)) is disordered.

This is an uncharacterized protein from Homo sapiens (Human).